The chain runs to 215 residues: Probable glutathione S-transferase GSTF2 (215 aa).

The region spanning 2–83 (APMKLYGSTL…YVCRKNKPEL (82 aa)) is the GST N-terminal domain. Residues S12, 41–42 (HK), 54–55 (QV), and 67–68 (ES) each bind glutathione. A GST C-terminal domain is found at 88 to 215 (DLKESAMVDV…KVASLMKPPA (128 aa)).

Belongs to the GST superfamily. Phi family. Constitutively expressed in roots. Expressed in anthers, callus, panicles, sheaths and stems (at protein level).

The catalysed reaction is RX + glutathione = an S-substituted glutathione + a halide anion + H(+). Functionally, conjugation of reduced glutathione to a wide number of exogenous and endogenous hydrophobic electrophiles. The polypeptide is Probable glutathione S-transferase GSTF2 (GSTF2) (Oryza sativa subsp. japonica (Rice)).